The sequence spans 365 residues: Phosphatidylcholine:ceramide cholinephosphotransferase 4 (365 aa).

Over 1–44 (MISYPFFSLSPPGLVPPPMAVPPVEMYSGSFWNRMRKPLPLRTQ) the chain is Cytoplasmic. Residues 45 to 65 (VIRFTVVFVIVSFILAVALQI) traverse the membrane as a helical segment. Residues 66-92 (THERMPDPKVTKPLPDLGFELLTKVPG) are Lumenal-facing. Residues 93–113 (MYVLADCCIGFLNILSVFTAF) traverse the membrane as a helical segment. Over 114–165 (KLYLLHRHCVGSGEPELPCNIPGVSRFFLSVWLCKENCRIELRNIHTIAWIR) the chain is Cytoplasmic. The chain crosses the membrane as a helical span at residues 166–186 (FITSYALLLLFRSAVIVMTSL). At 187-229 (PAPDDLCQDPPKIENPVKNVILTVLTAGGGSIHCGDLMYSGHT) the chain is on the lumenal side. Histidine 228 is an active-site residue. A helical membrane pass occupies residues 230–250 (VILTLHLMFHWIYGAMVHWSF). Arginine 251 is a topological domain (cytoplasmic). The helical transmembrane segment at 252-272 (PVVTVVAIFGYYCIVASRFHY) threads the bilayer. Catalysis depends on residues histidine 271 and aspartate 275. Over 273-275 (TDD) the chain is Lumenal. The chain crosses the membrane as a helical span at residues 276 to 296 (VLVAIYLTIATFIAVGHNADG). The Cytoplasmic segment spans residues 297 to 365 (APWQLQLFIR…SLMFKCGAYV (69 aa)).

The protein belongs to the sphingomyelin synthase family.

It is found in the golgi apparatus membrane. It catalyses the reaction an N-acylsphing-4-enine + a 1,2-diacyl-sn-glycero-3-phosphocholine = a sphingomyelin + a 1,2-diacyl-sn-glycerol. It carries out the reaction an N-acylsphinganine + a 1,2-diacyl-sn-glycero-3-phosphocholine = an N-acylsphinganine-1-phosphocholine + a 1,2-diacyl-sn-glycerol. The catalysed reaction is an N-acylsphing-4-enine + a 1,2-diacyl-sn-glycero-3-phosphoethanolamine = an N-acylsphing-4-enine 1-phosphoethanolamine + a 1,2-diacyl-sn-glycerol. The enzyme catalyses an N-acylsphinganine + a 1,2-diacyl-sn-glycero-3-phosphoethanolamine = an N-acylsphinganine-1-phosphoethanolamine + a 1,2-diacyl-sn-glycerol. It catalyses the reaction a 1,2-diacyl-sn-glycero-3-phospho-(1D-myo-inositol) + an N-acylsphing-4-enine = an N-acylsphing-4-enine-(1D-myo-inositol) + a 1,2-diacyl-sn-glycerol. It carries out the reaction an N-acylsphinganine + a 1,2-diacyl-sn-glycero-3-phospho-(1D-myo-inositol) = an N-acylsphinganine-(1D-myo-inositol) + a 1,2-diacyl-sn-glycerol. Functionally, bifunctional sphingomyelin (SM)/ethanolamine phosphorylceramide (EPC) synthase with minimal inositol phosphorylceramide (IPC) synthase activity. Specificity is likely to be defined by residues in the lumenal catalytic domain that interact with the polar head groups of the phospholipid donors. SM is synthesized by both stages of the parasite life cycle, bloodstream forms (BSF) and procyclic forms (PCF), by transferring the phosphoryl headgroup from a 1,2-diacyl-sn-glycero-3-phosphocholine to an N-acylsphing-4-enine (ceramide) or an N-acylsphinganine (dihydroceramide) with release of 1,2-diacyl-sn-glycerol. Also catalyzes the reverse reaction, production of ceramide from sphingomyelin. EPC is synthesized by transferring phosphoethanolamine from a 1,2-diacyl-sn-glycero-3-phosphoethanolamine to ceramide or dihydroceramide by BSF and PCF, while IPC is confined to PCF. The ceramide/dihydroceramide ratios are skewed towards dihydroceramide in PCF parasites and ceramide in BSF parasites, this is likely due to differential expression and/or regulation of dihydroceramide desaturase, the enzyme responsible for converting dihydroceramide to ceramide. The protein is Phosphatidylcholine:ceramide cholinephosphotransferase 4 of Trypanosoma brucei brucei.